Reading from the N-terminus, the 282-residue chain is Probable methylxanthine N7-demethylase NdmC (282 aa).

The enzyme catalyses 7-methylxanthine + NADPH + O2 + H(+) = xanthine + formaldehyde + NADP(+) + H2O. The catalysed reaction is 7-methylxanthine + NADH + O2 + H(+) = xanthine + formaldehyde + NAD(+) + H2O. Functionally, involved in the caffeine degradation, which is the essential first step for assimilating the carbon and nitrogen in caffeine. Probably catalyzes the N7-demethylation of 7-methylxanthine to produce xanthine and formaldehyde. In Pseudomonas sp. (strain TJI-51), this protein is Probable methylxanthine N7-demethylase NdmC.